The sequence spans 108 residues: Protein S100-A15A (108 aa).

Positions 53 to 88 constitute an EF-hand domain; that stretch reads KEPYYVTELFQATDKNRDNQICFDEFLYILGKLVKD. The Ca(2+) site is built by D66, N68, D70, Q72, and E77.

The protein belongs to the S-100 family.

The polypeptide is Protein S100-A15A (S100A15A) (Gorilla gorilla gorilla (Western lowland gorilla)).